Reading from the N-terminus, the 134-residue chain is Small ribosomal subunit protein bS6 (134 aa).

Belongs to the bacterial ribosomal protein bS6 family.

Its function is as follows. Binds together with bS18 to 16S ribosomal RNA. The sequence is that of Small ribosomal subunit protein bS6 from Chlorobium phaeobacteroides (strain BS1).